The sequence spans 302 residues: Probable 2-(5''-triphosphoribosyl)-3'-dephosphocoenzyme-A synthase (302 aa).

The protein belongs to the CitG/MdcB family.

It catalyses the reaction 3'-dephospho-CoA + ATP = 2'-(5''-triphospho-alpha-D-ribosyl)-3'-dephospho-CoA + adenine. This chain is Probable 2-(5''-triphosphoribosyl)-3'-dephosphocoenzyme-A synthase, found in Albidiferax ferrireducens (strain ATCC BAA-621 / DSM 15236 / T118) (Rhodoferax ferrireducens).